The sequence spans 356 residues: Protein pelota homolog (356 aa).

This sequence belongs to the eukaryotic release factor 1 family. Pelota subfamily. Monomer. A divalent metal cation is required as a cofactor.

It localises to the cytoplasm. Its function is as follows. May function in recognizing stalled ribosomes, interact with stem-loop structures in stalled mRNA molecules, and effect endonucleolytic cleavage of the mRNA. May play a role in the release non-functional ribosomes and degradation of damaged mRNAs. Has endoribonuclease activity. The polypeptide is Protein pelota homolog (Aeropyrum pernix (strain ATCC 700893 / DSM 11879 / JCM 9820 / NBRC 100138 / K1)).